The chain runs to 676 residues: Phosphatidylinositol-3,5-bisphosphate 3-phosphatase MTMR6 (676 aa).

Residues 125-501 (GWRRLDWNSE…ARFTVWTAMY (377 aa)) enclose the Myotubularin phosphatase domain. A 1,2-diacyl-sn-glycero-3-phospho-(1D-myo-inositol-3,5-bisphosphate) contacts are provided by N249, N274, and I275. The a 1,2-diacyl-sn-glycero-3-phospho-(1D-myo-inositol-3-phosphate) site is built by N249, N274, and I275. Substrate contacts are provided by residues 249–252 (NKVQ), 274–275 (NI), and 335–341 (CSDGWDR). C335 functions as the Phosphocysteine intermediate in the catalytic mechanism. S336, D337, G338, W339, D340, R341, K377, and R381 together coordinate a 1,2-diacyl-sn-glycero-3-phospho-(1D-myo-inositol-3,5-bisphosphate). The a 1,2-diacyl-sn-glycero-3-phospho-(1D-myo-inositol-3-phosphate) site is built by S336, D337, G338, W339, D340, and R341. R381 contributes to the a 1,2-diacyl-sn-glycero-3-phospho-(1D-myo-inositol-3-phosphate) binding site. Substrate is bound at residue R381. The FYVE-type zinc finger occupies 618–675 (KWQPLRGADRCSNPACRGEFSSTIERRIHCHLCGMIFCRRCLKVSADERERVCDKCKT).

The protein belongs to the protein-tyrosine phosphatase family. Non-receptor class myotubularin subfamily. As to quaternary structure, heterodimer with mtm-9. In terms of tissue distribution, expressed in intestinal cells. Expressed in head neurons, pre-anal ganglion, hypodermal cells, anal depressor muscle and non-neuronal cells in the tail.

It is found in the cytoplasm. It localises to the membrane. The protein resides in the apical cell membrane. It carries out the reaction a 1,2-diacyl-sn-glycero-3-phospho-(1D-myo-inositol-3,5-bisphosphate) + H2O = a 1,2-diacyl-sn-glycero-3-phospho-(1D-myo-inositol-5-phosphate) + phosphate. The catalysed reaction is a 1,2-diacyl-sn-glycero-3-phospho-(1D-myo-inositol-3-phosphate) + H2O = a 1,2-diacyl-sn-glycero-3-phospho-(1D-myo-inositol) + phosphate. The enzyme catalyses 1,2-dioctanoyl-sn-glycero-3-phospho-(1D-myo-inositol-3,5-bisphosphate) + H2O = 1,2-dioctanoyl-sn-glycero-3-phospho-(1D-myo-inositol-5-phosphate) + phosphate. It catalyses the reaction 1,2-dioctanoyl-sn-glycero-3-phospho-(1-D-myo-inositol-3-phosphate) + H2O = 1,2-dioctanoyl-sn-glycero-3-phospho-(1D-myo-inositol) + phosphate. Its function is as follows. Probable lipid phosphatase that specifically dephosphorylates the D-3 position of phosphatidylinositol 3-phosphate and phosphatidylinositol 3,5-bisphosphate, generating phosphatidylinositol and phosphatidylinositol 5-phosphate. In association with mtm-9, plays a role in endosome trafficking probably by regulating phosphatidylinositol-3-phosphate levels. Regulates fluid phase endocytosis in coelomocytes. Controls the endosomal localization of sorting nexin snx-3 and the levels of sorting receptor mig-14. By regulating the retrograde transport of mig-14, may be involved in the secretion of Wnt ligands such as egl-20. Regulates posterior migration of QL neuroblast descendants and the anterior migration of QR neuroblast descendants and HSN neurons during larval development. Involved in the formation of correct synapse number in DA9 motor neurons probably in part by regulating the secretion of Wnt ligand egl-20. This chain is Phosphatidylinositol-3,5-bisphosphate 3-phosphatase MTMR6, found in Caenorhabditis elegans.